The primary structure comprises 369 residues: Polycomb group protein FERTILIZATION-INDEPENDENT ENDOSPERM (369 aa).

WD repeat units lie at residues 31–73 (EGKK…AISA), 81–123 (DKEE…IHKS), 126–166 (GHGD…CILI), 172–212 (GHRY…TYVE), 238–275 (IHTNYVDCNRWFGDFILSKSVDNEILLWEPQLKENSPG), 287–328 (VPMC…PVLI), and 335–368 (QSKSVIRQTAMSVDGSTILACCEDGTIWRWDVIT).

The protein belongs to the WD repeat ESC family. Interacts directly with MEA. These two proteins are probably indirectly associated with FIS2. In plants, PcG complexes are probably composed of a member of the EZ family (CLF or MEA), FIE, and a member of the VEFS family (FIS2, VRN2 or EMF2). Component of the plant homeodomain / polycomb repressive complex 2 (PHD-PRC2) large complex during prolonged cold, composed of core PRC2 components (VRN2, EZA1, FIE and MSI1), and three related PHD finger proteins (VIL1, VIL2 and VIN3) that mediates histone H3 trimethylation on 'Lys-27' (H3K27me3). Binds to ALP1. As to expression, expressed in cauline leaves, root and stems. In the male reproductive organ, it is expressed in the developing anther; and is abundant in microspore mother cells, in microsporocytes and in the tapetum, but is absent from vascular bundles, the connective tissue and the filament. It is also absent from pollen grains at subsequent developmental stages. In the developing female reproductive organs, it is highly expressed in all cells of the young ovules primordium before archesporial differentiation. Then, it is highly expressed in the ovule sporophytic tissue and the megaspore mother cell before meiosis, but is absent from placenta or the developing carpel. Then, it decreases.

It is found in the nucleus. Functionally, polycomb group (PcG) protein. PcG proteins act by forming multiprotein complexes, which are required to maintain the transcriptionally repressive state of homeotic genes throughout development. PcG proteins are not required to initiate repression, but to maintain it during later stages of development. They probably act via the methylation of histones, rendering chromatin heritably changed in its expressibility. Required to prevent the proliferation of the central cell by repressing unknown target genes before fertilization. Probably also involved in floral repression mechanism established during early plant development. Regulates the anteroposterior organization of the endosperm. Interacts with the promoter and represses the transcription of genes such as PHE1, that are paternally active and maternally silenced. This Arabidopsis thaliana (Mouse-ear cress) protein is Polycomb group protein FERTILIZATION-INDEPENDENT ENDOSPERM (FIE).